The following is a 220-amino-acid chain: Translation initiation factor 6 (220 aa).

It belongs to the eIF-6 family.

Functionally, binds to the 50S ribosomal subunit and prevents its association with the 30S ribosomal subunit to form the 70S initiation complex. In Pyrobaculum arsenaticum (strain DSM 13514 / JCM 11321 / PZ6), this protein is Translation initiation factor 6.